The chain runs to 256 residues: 5-oxoprolinase subunit A (256 aa).

It belongs to the LamB/PxpA family. As to quaternary structure, forms a complex composed of PxpA, PxpB and PxpC.

The catalysed reaction is 5-oxo-L-proline + ATP + 2 H2O = L-glutamate + ADP + phosphate + H(+). Functionally, catalyzes the cleavage of 5-oxoproline to form L-glutamate coupled to the hydrolysis of ATP to ADP and inorganic phosphate. This is 5-oxoprolinase subunit A from Alkaliphilus metalliredigens (strain QYMF).